Reading from the N-terminus, the 83-residue chain is RNA-binding protein Hfq (83 aa).

Residues 9-69 enclose the Sm domain; it reads DYFLNQLRKD…ISTFAPARNV (61 aa).

The protein belongs to the Hfq family. Homohexamer.

Its function is as follows. RNA chaperone that binds small regulatory RNA (sRNAs) and mRNAs to facilitate mRNA translational regulation in response to envelope stress, environmental stress and changes in metabolite concentrations. Also binds with high specificity to tRNAs. This is RNA-binding protein Hfq from Exiguobacterium sibiricum (strain DSM 17290 / CCUG 55495 / CIP 109462 / JCM 13490 / 255-15).